A 418-amino-acid chain; its full sequence is Trans-acting enoyl reductase (418 aa).

Belongs to the saccharopine dehydrogenase family. Enoyl reductase subfamily.

Its function is as follows. Involved in the reduction of the double bond between C-4 and C-5 during phthiocerol dimycocerosates (DIM A) and glycosylated phenolphthiocerol dimycocerosates (PGL) biosynthesis. This is Trans-acting enoyl reductase from Mycobacterium tuberculosis (strain ATCC 25177 / H37Ra).